A 152-amino-acid chain; its full sequence is Cell division protein SepF (152 aa).

Residues 21–56 (EYIETEQDHPEEHEQQKDKQPAYAQKPQGKQNVVSL) are disordered. Over residues 26–40 (EQDHPEEHEQQKDKQ) the composition is skewed to basic and acidic residues.

This sequence belongs to the SepF family. As to quaternary structure, homodimer. Interacts with FtsZ.

The protein localises to the cytoplasm. Cell division protein that is part of the divisome complex and is recruited early to the Z-ring. Probably stimulates Z-ring formation, perhaps through the cross-linking of FtsZ protofilaments. Its function overlaps with FtsA. The polypeptide is Cell division protein SepF (Bacillus velezensis (strain DSM 23117 / BGSC 10A6 / LMG 26770 / FZB42) (Bacillus amyloliquefaciens subsp. plantarum)).